A 363-amino-acid polypeptide reads, in one-letter code: Ribosome-binding ATPase YchF (363 aa).

Positions 3 to 256 (FKCGIVGLPN…LDDEEKVEFL (254 aa)) constitute an OBG-type G domain. ATP is bound at residue 12-17 (NVGKST). Residues Ser-16 and Thr-36 each contribute to the Mg(2+) site. One can recognise a TGS domain in the interval 278-361 (NLQTYFTAGV…QDGDVMHFRF (84 aa)).

It depends on Mg(2+) as a cofactor.

In terms of biological role, ATPase that binds to both the 70S ribosome and the 50S ribosomal subunit in a nucleotide-independent manner. Does not hydrolyze GTP. This is Ribosome-binding ATPase YchF from Haemophilus influenzae (strain ATCC 51907 / DSM 11121 / KW20 / Rd).